Reading from the N-terminus, the 500-residue chain is Probable malate:quinone oxidoreductase (500 aa).

This sequence belongs to the MQO family. It depends on FAD as a cofactor.

It carries out the reaction (S)-malate + a quinone = a quinol + oxaloacetate. Its pathway is carbohydrate metabolism; tricarboxylic acid cycle; oxaloacetate from (S)-malate (quinone route): step 1/1. The chain is Probable malate:quinone oxidoreductase from Bacillus cereus (strain ATCC 10987 / NRS 248).